A 526-amino-acid polypeptide reads, in one-letter code: AAA ATPase forming ring-shaped complexes (526 aa).

Residues 1-18 are compositionally biased toward polar residues; sequence MGDMASSTDPAAHNSFSD. The tract at residues 1 to 20 is disordered; the sequence is MGDMASSTDPAAHNSFSDFN. Residues 20–59 are a coiled coil; that stretch reads NREEMTRLADNVRSLQRTNQDLSARNTKLAEMLKSSRDKL. 257–262 lines the ATP pocket; sequence GCGKTL.

Belongs to the AAA ATPase family. As to quaternary structure, homohexamer. Assembles into a hexameric ring structure.

This is AAA ATPase forming ring-shaped complexes from Corynebacterium efficiens (strain DSM 44549 / YS-314 / AJ 12310 / JCM 11189 / NBRC 100395).